A 120-amino-acid chain; its full sequence is MSTSGMLFIFATFCPCFLSCCAFMSHWKLKDFSFRFLRMCGERSLVVCYPLKLLKQIRSLFSIAIGHLSLMLIEGSANLLSLEEISRTLLRILDFVGNKNMRTYLEVPLCRWHISQARPN.

The first 22 residues, 1–22 (MSTSGMLFIFATFCPCFLSCCA), serve as a signal peptide directing secretion. Residues 23–59 (FMSHWKLKDFSFRFLRMCGERSLVVCYPLKLLKQIRS) are Extracellular-facing. Residues 60 to 80 (LFSIAIGHLSLMLIEGSANLL) form a helical membrane-spanning segment. Over 81–120 (SLEEISRTLLRILDFVGNKNMRTYLEVPLCRWHISQARPN) the chain is Cytoplasmic.

It is found in the membrane. This is an uncharacterized protein from Schizosaccharomyces pombe (strain 972 / ATCC 24843) (Fission yeast).